Reading from the N-terminus, the 410-residue chain is Multifunctional CCA protein (410 aa).

The ATP site is built by G8 and R11. The CTP site is built by G8 and R11. D21 and D23 together coordinate Mg(2+). Positions 91, 138, and 141 each coordinate ATP. CTP is bound by residues R91, R138, and R141. Residues 229–347 (TGIHQEMVSD…AQLALVCEAD (119 aa)) form the HD domain.

It belongs to the tRNA nucleotidyltransferase/poly(A) polymerase family. Bacterial CCA-adding enzyme type 1 subfamily. As to quaternary structure, monomer. Can also form homodimers and oligomers. Requires Mg(2+) as cofactor. Ni(2+) serves as cofactor.

It catalyses the reaction a tRNA precursor + 2 CTP + ATP = a tRNA with a 3' CCA end + 3 diphosphate. The catalysed reaction is a tRNA with a 3' CCA end + 2 CTP + ATP = a tRNA with a 3' CCACCA end + 3 diphosphate. Catalyzes the addition and repair of the essential 3'-terminal CCA sequence in tRNAs without using a nucleic acid template. Adds these three nucleotides in the order of C, C, and A to the tRNA nucleotide-73, using CTP and ATP as substrates and producing inorganic pyrophosphate. tRNA 3'-terminal CCA addition is required both for tRNA processing and repair. Also involved in tRNA surveillance by mediating tandem CCA addition to generate a CCACCA at the 3' terminus of unstable tRNAs. While stable tRNAs receive only 3'-terminal CCA, unstable tRNAs are marked with CCACCA and rapidly degraded. The sequence is that of Multifunctional CCA protein from Xanthomonas oryzae pv. oryzae (strain MAFF 311018).